Here is a 367-residue protein sequence, read N- to C-terminus: Peptide chain release factor 2 (367 aa).

Residue Gln250 is modified to N5-methylglutamine.

It belongs to the prokaryotic/mitochondrial release factor family. Post-translationally, methylated by PrmC. Methylation increases the termination efficiency of RF2.

Its subcellular location is the cytoplasm. In terms of biological role, peptide chain release factor 2 directs the termination of translation in response to the peptide chain termination codons UGA and UAA. This Saccharopolyspora erythraea (strain ATCC 11635 / DSM 40517 / JCM 4748 / NBRC 13426 / NCIMB 8594 / NRRL 2338) protein is Peptide chain release factor 2.